The chain runs to 446 residues: Adenylosuccinate synthetase (446 aa).

GTP contacts are provided by residues 20–26 and 48–50; these read GDEGKGK and GHT. Asp21 serves as the catalytic Proton acceptor. Positions 21 and 48 each coordinate Mg(2+). IMP-binding positions include 21-24, 46-49, Thr137, Arg151, Gln232, Thr247, and Arg319; these read DEGK and NAGH. His49 (proton donor) is an active-site residue. 315-321 serves as a coordination point for substrate; it reads SVTGRPR. GTP contacts are provided by residues Arg321, 347-349, and 429-431; these read KLD and STG.

It belongs to the adenylosuccinate synthetase family. In terms of assembly, homodimer. Mg(2+) serves as cofactor.

The protein resides in the cytoplasm. The enzyme catalyses IMP + L-aspartate + GTP = N(6)-(1,2-dicarboxyethyl)-AMP + GDP + phosphate + 2 H(+). Its pathway is purine metabolism; AMP biosynthesis via de novo pathway; AMP from IMP: step 1/2. Plays an important role in the de novo pathway of purine nucleotide biosynthesis. Catalyzes the first committed step in the biosynthesis of AMP from IMP. The polypeptide is Adenylosuccinate synthetase (Ralstonia nicotianae (strain ATCC BAA-1114 / GMI1000) (Ralstonia solanacearum)).